The chain runs to 436 residues: Glutamyl-tRNA reductase (436 aa).

Residues 49 to 52, Ser-118, 123 to 125, and Gln-129 contribute to the substrate site; these read TCNR and EPQ. Residue Cys-50 is the Nucleophile of the active site. 203-208 lines the NADP(+) pocket; sequence GAGETI.

This sequence belongs to the glutamyl-tRNA reductase family. Homodimer.

It catalyses the reaction (S)-4-amino-5-oxopentanoate + tRNA(Glu) + NADP(+) = L-glutamyl-tRNA(Glu) + NADPH + H(+). The protein operates within porphyrin-containing compound metabolism; protoporphyrin-IX biosynthesis; 5-aminolevulinate from L-glutamyl-tRNA(Glu): step 1/2. In terms of biological role, catalyzes the NADPH-dependent reduction of glutamyl-tRNA(Glu) to glutamate 1-semialdehyde (GSA). This Actinobacillus pleuropneumoniae serotype 7 (strain AP76) protein is Glutamyl-tRNA reductase.